Consider the following 1378-residue polypeptide: DNA-directed RNA polymerase subunit beta (1378 aa).

It belongs to the RNA polymerase beta chain family. As to quaternary structure, the RNAP catalytic core consists of 2 alpha, 1 beta, 1 beta' and 1 omega subunit. When a sigma factor is associated with the core the holoenzyme is formed, which can initiate transcription.

It catalyses the reaction RNA(n) + a ribonucleoside 5'-triphosphate = RNA(n+1) + diphosphate. In terms of biological role, DNA-dependent RNA polymerase catalyzes the transcription of DNA into RNA using the four ribonucleoside triphosphates as substrates. The polypeptide is DNA-directed RNA polymerase subunit beta (Agrobacterium fabrum (strain C58 / ATCC 33970) (Agrobacterium tumefaciens (strain C58))).